Reading from the N-terminus, the 389-residue chain is Geranylgeranyl pyrophosphate synthase A (389 aa).

Residues Lys99, Arg102, and His131 each contribute to the isopentenyl diphosphate site. Asp138 and Asp142 together coordinate Mg(2+). Arg147 is a binding site for dimethylallyl diphosphate. Arg148 lines the isopentenyl diphosphate pocket.

Belongs to the FPP/GGPP synthase family. Mg(2+) is required as a cofactor.

Its subcellular location is the cytoplasm. It carries out the reaction isopentenyl diphosphate + (2E)-geranyl diphosphate = (2E,6E)-farnesyl diphosphate + diphosphate. The enzyme catalyses isopentenyl diphosphate + (2E,6E)-farnesyl diphosphate = (2E,6E,10E)-geranylgeranyl diphosphate + diphosphate. Its pathway is isoprenoid biosynthesis; farnesyl diphosphate biosynthesis; farnesyl diphosphate from geranyl diphosphate and isopentenyl diphosphate: step 1/1. The protein operates within isoprenoid biosynthesis; geranylgeranyl diphosphate biosynthesis; geranylgeranyl diphosphate from farnesyl diphosphate and isopentenyl diphosphate: step 1/1. Its function is as follows. Catalyzes the trans-addition of the 2 molecules of isopentenyl diphosphate (IPP) onto geranyl diphosphate (GDP) to form geranylgeranyl pyrophosphate (GGDP). Does not catalyze the conversion of dimethylallyl diphosphate (DMAPP). In Phomopsis amygdali (Fusicoccum amygdali), this protein is Geranylgeranyl pyrophosphate synthase A (GGS-A).